We begin with the raw amino-acid sequence, 185 residues long: Ribosome-recycling factor (185 aa).

Belongs to the RRF family.

The protein localises to the cytoplasm. Functionally, responsible for the release of ribosomes from messenger RNA at the termination of protein biosynthesis. May increase the efficiency of translation by recycling ribosomes from one round of translation to another. This chain is Ribosome-recycling factor, found in Aromatoleum aromaticum (strain DSM 19018 / LMG 30748 / EbN1) (Azoarcus sp. (strain EbN1)).